An 864-amino-acid polypeptide reads, in one-letter code: DNA mismatch repair protein MutS (864 aa).

G607–S614 provides a ligand contact to ATP.

Belongs to the DNA mismatch repair MutS family.

This protein is involved in the repair of mismatches in DNA. It is possible that it carries out the mismatch recognition step. This protein has a weak ATPase activity. The polypeptide is DNA mismatch repair protein MutS (Neisseria meningitidis serogroup C (strain 053442)).